The chain runs to 155 residues: Ribonuclease H (155 aa).

Positions 1 to 142 (MLKQVEIFTD…CDELARAAAM (142 aa)) constitute an RNase H type-1 domain. Residues D10, E48, D70, and D134 each contribute to the Mg(2+) site.

The protein belongs to the RNase H family. Monomer. Requires Mg(2+) as cofactor.

The protein localises to the cytoplasm. It catalyses the reaction Endonucleolytic cleavage to 5'-phosphomonoester.. Endonuclease that specifically degrades the RNA of RNA-DNA hybrids. The polypeptide is Ribonuclease H (Salmonella paratyphi C (strain RKS4594)).